We begin with the raw amino-acid sequence, 249 residues long: tRNA (guanine-N(7)-)-methyltransferase (249 aa).

The segment at 1-24 (MHSIPADTGHTPSRAPAGNGSPPA) is disordered. Positions 81, 106, 133, and 156 each coordinate S-adenosyl-L-methionine. Asp-156 is a catalytic residue. Lys-160 lines the substrate pocket. An interaction with RNA region spans residues 162–167 (RHNKRR). Residues Asp-192 and 227–230 (TKFE) contribute to the substrate site.

This sequence belongs to the class I-like SAM-binding methyltransferase superfamily. TrmB family.

It carries out the reaction guanosine(46) in tRNA + S-adenosyl-L-methionine = N(7)-methylguanosine(46) in tRNA + S-adenosyl-L-homocysteine. It participates in tRNA modification; N(7)-methylguanine-tRNA biosynthesis. Functionally, catalyzes the formation of N(7)-methylguanine at position 46 (m7G46) in tRNA. This Paracidovorax citrulli (strain AAC00-1) (Acidovorax citrulli) protein is tRNA (guanine-N(7)-)-methyltransferase.